A 293-amino-acid polypeptide reads, in one-letter code: N-acetylmannosamine kinase (293 aa).

Residues 5 to 12 (AIDIGGTK) and 133 to 140 (GVGGGLVI) contribute to the ATP site. 4 residues coordinate Zn(2+): His-157, Cys-167, Cys-169, and Cys-174.

This sequence belongs to the ROK (NagC/XylR) family. NanK subfamily. In terms of assembly, homodimer.

The enzyme catalyses an N-acyl-D-mannosamine + ATP = an N-acyl-D-mannosamine 6-phosphate + ADP + H(+). The protein operates within amino-sugar metabolism; N-acetylneuraminate degradation; D-fructose 6-phosphate from N-acetylneuraminate: step 2/5. Its function is as follows. Catalyzes the phosphorylation of N-acetylmannosamine (ManNAc) to ManNAc-6-P. The sequence is that of N-acetylmannosamine kinase from Vibrio vulnificus (strain YJ016).